The chain runs to 252 residues: Spermatogenesis-associated protein 9 (252 aa).

The helical transmembrane segment at 145–167 (TSIMYASYAALIYLAVCVNAVLA) threads the bilayer. Basic and acidic residues predominate over residues 208 to 221 (KAKPYRSLPEKPDN). Residues 208 to 235 (KAKPYRSLPEKPDNLLDQPKPPANKQSN) form a disordered region.

Its subcellular location is the membrane. Functionally, may play at role in testicular development/spermatogenesis and may be an important factor in male infertility. The chain is Spermatogenesis-associated protein 9 (Spata9) from Mus musculus (Mouse).